Here is a 285-residue protein sequence, read N- to C-terminus: Stress response regulator protein 1 (285 aa).

Composition is skewed to low complexity over residues 43–58 and 128–138; these read DTSSQNDSISTQSSNN and SIISSKSSNKS. Disordered stretches follow at residues 43-66 and 114-142; these read DTSSQNDSISTQSSNNDDTHSDQQ and PLTPFDDQTTSPQDSIISSKSSNKSTTVV. The 119-residue stretch at 158 to 276 folds into the Response regulatory domain; that stretch reads SFLIVDDNII…LDFMANSIDD (119 aa). A 4-aspartylphosphate modification is found at D209.

Functionally, required for stress adaptation, morphogenesis and virulence. The protein is Stress response regulator protein 1 (SRR1) of Candida dubliniensis (strain CD36 / ATCC MYA-646 / CBS 7987 / NCPF 3949 / NRRL Y-17841) (Yeast).